Here is a 383-residue protein sequence, read N- to C-terminus: Putative 8-amino-7-oxononanoate synthase (383 aa).

Arginine 22 lines the substrate pocket. 109–110 (GY) serves as a coordination point for pyridoxal 5'-phosphate. Histidine 134 contributes to the substrate binding site. Pyridoxal 5'-phosphate-binding positions include serine 182, 207–210 (DDAH), and 236–239 (TLSK). Residue lysine 239 is modified to N6-(pyridoxal phosphate)lysine. Threonine 348 provides a ligand contact to substrate.

The protein belongs to the class-II pyridoxal-phosphate-dependent aminotransferase family. BioF subfamily. As to quaternary structure, homodimer. Pyridoxal 5'-phosphate is required as a cofactor.

It carries out the reaction 6-carboxyhexanoyl-[ACP] + L-alanine + H(+) = (8S)-8-amino-7-oxononanoate + holo-[ACP] + CO2. It participates in cofactor biosynthesis; biotin biosynthesis. In terms of biological role, catalyzes the decarboxylative condensation of pimeloyl-[acyl-carrier protein] and L-alanine to produce 8-amino-7-oxononanoate (AON), [acyl-carrier protein], and carbon dioxide. The protein is Putative 8-amino-7-oxononanoate synthase (bioF) of Caulobacter sp. (strain K31).